The following is a 273-amino-acid chain: NH(3)-dependent NAD(+) synthetase (273 aa).

Residue 47-54 (GISGGQDS) participates in ATP binding. Residue D53 coordinates Mg(2+). R139 lines the deamido-NAD(+) pocket. T159 is a binding site for ATP. Residue E164 coordinates Mg(2+). Residues K172 and D179 each coordinate deamido-NAD(+). K188 and T210 together coordinate ATP. 259-260 (HK) provides a ligand contact to deamido-NAD(+).

Belongs to the NAD synthetase family. As to quaternary structure, homodimer.

It catalyses the reaction deamido-NAD(+) + NH4(+) + ATP = AMP + diphosphate + NAD(+) + H(+). It participates in cofactor biosynthesis; NAD(+) biosynthesis; NAD(+) from deamido-NAD(+) (ammonia route): step 1/1. Functionally, catalyzes the ATP-dependent amidation of deamido-NAD to form NAD. Uses ammonia as a nitrogen source. The sequence is that of NH(3)-dependent NAD(+) synthetase from Staphylococcus aureus (strain MRSA252).